A 208-amino-acid polypeptide reads, in one-letter code: Mediator of RNA polymerase II transcription subunit 18 (208 aa).

Ser66 is modified (phosphoserine).

The protein belongs to the Mediator complex subunit 18 family. Component of the Mediator complex, which is composed of MED1, MED4, MED6, MED7, MED8, MED9, MED10, MED11, MED12, MED13, MED13L, MED14, MED15, MED16, MED17, MED18, MED19, MED20, MED21, MED22, MED23, MED24, MED25, MED26, MED27, MED29, MED30, MED31, CCNC, CDK8 and CDC2L6/CDK11. The MED12, MED13, CCNC and CDK8 subunits form a distinct module termed the CDK8 module. Mediator containing the CDK8 module is less active than Mediator lacking this module in supporting transcriptional activation. Individual preparations of the Mediator complex lacking one or more distinct subunits have been variously termed ARC, CRSP, DRIP, PC2, SMCC and TRAP.

The protein resides in the nucleus. In terms of biological role, component of the Mediator complex, a coactivator involved in the regulated transcription of nearly all RNA polymerase II-dependent genes. Mediator functions as a bridge to convey information from gene-specific regulatory proteins to the basal RNA polymerase II transcription machinery. Mediator is recruited to promoters by direct interactions with regulatory proteins and serves as a scaffold for the assembly of a functional preinitiation complex with RNA polymerase II and the general transcription factors. The polypeptide is Mediator of RNA polymerase II transcription subunit 18 (MED18) (Bos taurus (Bovine)).